Reading from the N-terminus, the 504-residue chain is L-amino-acid oxidase (504 aa).

Residues 1-18 form the signal peptide; that stretch reads MNVFFMFSLLFLATLGSC. C28 and C191 are disulfide-bonded. FAD is bound by residues 61-62, 81-82, R89, and 105-108; these read MS, EA, and GPMR. R108 serves as a coordination point for substrate. N190 carries N-linked (GlcNAc...) asparagine glycosylation. A substrate-binding site is contributed by H241. V279 contacts FAD. C349 and C430 are joined by a disulfide. A glycan (N-linked (GlcNAc...) asparagine) is linked at N379. Y390 contributes to the substrate binding site. FAD contacts are provided by residues E475 and 482–487; that span reads GWIDST. 482-483 provides a ligand contact to substrate; sequence GW.

The protein belongs to the flavin monoamine oxidase family. FIG1 subfamily. As to quaternary structure, homodimer; non-covalently linked. FAD is required as a cofactor. In terms of tissue distribution, expressed by the venom gland.

It localises to the secreted. The catalysed reaction is an L-alpha-amino acid + O2 + H2O = a 2-oxocarboxylate + H2O2 + NH4(+). The enzyme catalyses L-leucine + O2 + H2O = 4-methyl-2-oxopentanoate + H2O2 + NH4(+). It carries out the reaction L-phenylalanine + O2 + H2O = 3-phenylpyruvate + H2O2 + NH4(+). It catalyses the reaction L-tryptophan + O2 + H2O = indole-3-pyruvate + H2O2 + NH4(+). The catalysed reaction is L-methionine + O2 + H2O = 4-methylsulfanyl-2-oxobutanoate + H2O2 + NH4(+). The enzyme catalyses L-tyrosine + O2 + H2O = 3-(4-hydroxyphenyl)pyruvate + H2O2 + NH4(+). Functionally, catalyzes an oxidative deamination of predominantly hydrophobic and aromatic L-amino acids, thus producing hydrogen peroxide that may contribute to the diverse toxic effects of this enzyme. Is highly active on L-Tyr followed by L-Phe, L-Met, L-Leu, L-Trp, and weakly active on L-Ile, L-Arg, L-Val, L-Lys, and L-Ala. Inhibits ADP- and collagen-induced platelet aggregation. This inhibition is inhibited by catalase, indicating the importance of generated H(2)O(2) for the inhibitory effect. This effect on platelets among snake L-amino-acid oxidases is however controversial, since some of them induce aggregation, whereas the other inhibit agonist-induced aggregation. In vivo, this enzyme induces a rapid, substantial and reversible increase in the paw volume of mice (edema). In addition, myofibrosis, and inflammatory cell infiltration on the paw tissue are also observed. The sequence is that of L-amino-acid oxidase from Daboia russelii (Russel's viper).